We begin with the raw amino-acid sequence, 307 residues long: Myeloid-associated differentiation marker-like protein 2 (307 aa).

2 MARVEL domains span residues 17-154 (AVTS…ARPG) and 159-303 (YMAT…RIRF). 7 helical membrane-spanning segments follow: residues 53–73 (FCMAAWGFCFAVSALVVACEF), 90–110 (AFAMLATLLCATAAVLYPLYF), 129–149 (LAASVFAGLLFLAYAVEVALT), 163–183 (VSGLLKIVQAFVACIIFGALV), 198–218 (VAVYSLCFLATVAVVALSVMG), 229–249 (RLVVVYTFLAVLLYLSAAVIW), and 278–298 (LVVAIFTYVNLLLYVVDLAYS).

This sequence belongs to the MAL family.

It is found in the membrane. This is Myeloid-associated differentiation marker-like protein 2 (MYADML2) from Homo sapiens (Human).